A 443-amino-acid chain; its full sequence is Chromosomal replication initiator protein DnaA (443 aa).

The domain I, interacts with DnaA modulators stretch occupies residues Met-1 to Tyr-75. A domain II region spans residues Tyr-75–Ser-105. The segment at Val-106 to Ser-321 is domain III, AAA+ region. Residues Gly-150, Gly-152, Lys-153, and Thr-154 each coordinate ATP. Residues Ser-322–Lys-443 form a domain IV, binds dsDNA region.

It belongs to the DnaA family. Oligomerizes as a right-handed, spiral filament on DNA at oriC.

Its subcellular location is the cytoplasm. Plays an essential role in the initiation and regulation of chromosomal replication. ATP-DnaA binds to the origin of replication (oriC) to initiate formation of the DNA replication initiation complex once per cell cycle. Binds the DnaA box (a 9 base pair repeat at the origin) and separates the double-stranded (ds)DNA. Forms a right-handed helical filament on oriC DNA; dsDNA binds to the exterior of the filament while single-stranded (ss)DNA is stabiized in the filament's interior. The ATP-DnaA-oriC complex binds and stabilizes one strand of the AT-rich DNA unwinding element (DUE), permitting loading of DNA polymerase. After initiation quickly degrades to an ADP-DnaA complex that is not apt for DNA replication. Binds acidic phospholipids. The polypeptide is Chromosomal replication initiator protein DnaA (Acetivibrio thermocellus (strain ATCC 27405 / DSM 1237 / JCM 9322 / NBRC 103400 / NCIMB 10682 / NRRL B-4536 / VPI 7372) (Clostridium thermocellum)).